Consider the following 203-residue polypeptide: V-type ATP synthase subunit D (203 aa).

It belongs to the V-ATPase D subunit family.

Produces ATP from ADP in the presence of a proton gradient across the membrane. The sequence is that of V-type ATP synthase subunit D from Streptococcus pneumoniae (strain CGSP14).